The sequence spans 415 residues: Diaminopimelate decarboxylase (415 aa).

K54 is subject to N6-(pyridoxal phosphate)lysine. Residues G223 and 264–267 (EPGR) each bind pyridoxal 5'-phosphate. Substrate-binding residues include R267, R303, and Y307. The active-site Proton donor is the C338. The substrate site is built by E339 and Y374. Y374 is a pyridoxal 5'-phosphate binding site.

This sequence belongs to the Orn/Lys/Arg decarboxylase class-II family. LysA subfamily. Homodimer. The cofactor is pyridoxal 5'-phosphate.

The enzyme catalyses meso-2,6-diaminopimelate + H(+) = L-lysine + CO2. Its pathway is amino-acid biosynthesis; L-lysine biosynthesis via DAP pathway; L-lysine from DL-2,6-diaminopimelate: step 1/1. Its function is as follows. Specifically catalyzes the decarboxylation of meso-diaminopimelate (meso-DAP) to L-lysine. The polypeptide is Diaminopimelate decarboxylase (Buchnera aphidicola subsp. Acyrthosiphon pisum (strain APS) (Acyrthosiphon pisum symbiotic bacterium)).